The chain runs to 464 residues: Probable acid phosphatase DDB_G0284753 (464 aa).

A disordered region spans residues 1 to 29; the sequence is MFSYFRKSQQKVEENQNGGGGDGRGSGIK. Positions 17–26 are enriched in gly residues; that stretch reads NGGGGDGRGS. Catalysis depends on H81, which acts as the Nucleophile. The disordered stretch occupies residues 180 to 202; that stretch reads SFTDEQEKSPHHSSFLVKPDNEE. D347 acts as the Proton donor in catalysis.

This sequence belongs to the histidine acid phosphatase family.

It catalyses the reaction a phosphate monoester + H2O = an alcohol + phosphate. This is Probable acid phosphatase DDB_G0284753 from Dictyostelium discoideum (Social amoeba).